Consider the following 635-residue polypeptide: 1-deoxy-D-xylulose-5-phosphate synthase (635 aa).

Residues H77 and G118–A120 contribute to the thiamine diphosphate site. D149 provides a ligand contact to Mg(2+). Thiamine diphosphate contacts are provided by residues G150–S151, N178, F290, and E375. N178 lines the Mg(2+) pocket.

The protein belongs to the transketolase family. DXPS subfamily. Homodimer. Requires Mg(2+) as cofactor. Thiamine diphosphate serves as cofactor.

The catalysed reaction is D-glyceraldehyde 3-phosphate + pyruvate + H(+) = 1-deoxy-D-xylulose 5-phosphate + CO2. It participates in metabolic intermediate biosynthesis; 1-deoxy-D-xylulose 5-phosphate biosynthesis; 1-deoxy-D-xylulose 5-phosphate from D-glyceraldehyde 3-phosphate and pyruvate: step 1/1. Functionally, catalyzes the acyloin condensation reaction between C atoms 2 and 3 of pyruvate and glyceraldehyde 3-phosphate to yield 1-deoxy-D-xylulose-5-phosphate (DXP). This Chlorobium phaeovibrioides (strain DSM 265 / 1930) (Prosthecochloris vibrioformis (strain DSM 265)) protein is 1-deoxy-D-xylulose-5-phosphate synthase.